The chain runs to 367 residues: Nociceptin receptor (367 aa).

Residues 1 to 45 lie on the Extracellular side of the membrane; it reads MESLFPAPFWEVLYGSHFQGNLSLLNETVPHHLLLNASHSAFLPL. N-linked (GlcNAc...) asparagine glycans are attached at residues Asn-21, Asn-26, and Asn-36. Residues 46-71 form a helical membrane-spanning segment; it reads GLKVTIVGLYLAVCIGGLLGNCLVMY. Topologically, residues 72-84 are cytoplasmic; the sequence is VILRHTKMKTATN. A helical transmembrane segment spans residues 85–106; that stretch reads IYIFNLALADTLVLLTLPFQGT. Topologically, residues 107 to 121 are extracellular; the sequence is DILLGFWPFGNALCK. An intrachain disulfide couples Cys-120 to Cys-197. A helical membrane pass occupies residues 122–143; that stretch reads TVIAIDYYNMFTSTFTLTAMSV. Residues 144 to 162 lie on the Cytoplasmic side of the membrane; sequence DRYVAICHPIRALDVRTSS. Residues 163 to 185 traverse the membrane as a helical segment; that stretch reads KAQAVNVAIWALASVVGVPVAIM. At 186 to 208 the chain is on the extracellular side; the sequence is GSAQVEDEEIECLVEIPAPQDYW. The chain crosses the membrane as a helical span at residues 209–233; that stretch reads GPVFAICIFLFSFIIPVLIISVCYS. Residues 234 to 261 lie on the Cytoplasmic side of the membrane; that stretch reads LMIRRLRGVRLLSGSREKDRNLRRITRL. Residues 262–282 traverse the membrane as a helical segment; that stretch reads VLVVVAVFVGCWTPVQVFVLV. Residues 283–297 lie on the Extracellular side of the membrane; the sequence is QGLGVQPGSETAVAI. A helical membrane pass occupies residues 298-319; it reads LRFCTALGYVNSCLNPILYAFL. At 320–367 the chain is on the cytoplasmic side; sequence DENFKACFRKFCCASALHREMQVSDRVRSIAKDVGLGCKTSETVPRPA. Residue Cys-331 is the site of S-palmitoyl cysteine attachment.

This sequence belongs to the G-protein coupled receptor 1 family. In terms of processing, phosphorylation at Ser-360 requires GRK3. As to expression, in the brain, isoform KOR3 and isoform KOR3C are most abundant in hypothalamus and periaqueductal gray. Isoform KOR3A is highly expressed in cortex, striatum and brainstem. Isoform KOR3D is highly expressed in cerebellum, hypothalamus and brainstem. Detected in spleen lymphocytes.

The protein localises to the cell membrane. Its subcellular location is the cytoplasmic vesicle. In terms of biological role, G-protein coupled opioid receptor that functions as a receptor for the endogenous neuropeptide nociceptin. Ligand binding causes a conformation change that triggers signaling via guanine nucleotide-binding proteins (G proteins) and modulates the activity of down-stream effectors. Signaling via G proteins mediates inhibition of adenylate cyclase activity and calcium channel activity. Arrestins modulate signaling via G proteins and mediate the activation of alternative signaling pathways that lead to the activation of MAP kinases. Plays a role in modulating nociception and the perception of pain. Plays a role in the regulation of locomotor activity by the neuropeptide nociceptin. The sequence is that of Nociceptin receptor (Oprl1) from Mus musculus (Mouse).